Reading from the N-terminus, the 118-residue chain is MIVGHGIDLQEISAIEKVYQRNPRFAQKILTEQELAIFESFPYKRRLSYLAGRWSGKEAFVKAIGTGIGRLTFQDIEILNDVRGCPILTKSPFKGNSFISISHSGNYVQASVILEDKK.

D8 and E58 together coordinate Mg(2+).

This sequence belongs to the P-Pant transferase superfamily. AcpS family. Requires Mg(2+) as cofactor.

The protein localises to the cytoplasm. The catalysed reaction is apo-[ACP] + CoA = holo-[ACP] + adenosine 3',5'-bisphosphate + H(+). Functionally, transfers the 4'-phosphopantetheine moiety from coenzyme A to a Ser of acyl-carrier-protein. In Streptococcus pyogenes serotype M12 (strain MGAS2096), this protein is Holo-[acyl-carrier-protein] synthase.